The sequence spans 221 residues: uncharacterized protein (221 aa).

The segment covering 1–16 (MESSRWDKDPPGERRP) has biased composition (basic and acidic residues). The disordered stretch occupies residues 1-64 (MESSRWDKDP…SHTPQTNTRR (64 aa)).

This is an uncharacterized protein from Homo sapiens (Human).